Consider the following 748-residue polypeptide: Polyribonucleotide nucleotidyltransferase (748 aa).

Mg(2+)-binding residues include Asp-487 and Asp-493. Residues 554-613 (PSTTTIKIDKDKIRDIIGPSGKVIKEICETSGAKIDISDDGTVSVYASDRDKLKVALDKI) enclose the KH domain. Residues 623 to 691 (GEIFNGTVVK…NKGKAKLTIK (69 aa)) enclose the S1 motif domain. The tract at residues 693–733 (ADKDKSSNNTKPKTHVNNTKDNSEPEQRRDSSKKRAWNEDN) is disordered. The segment covering 699 to 712 (SNNTKPKTHVNNTK) has biased composition (polar residues). Basic and acidic residues predominate over residues 713-722 (DNSEPEQRRD).

This sequence belongs to the polyribonucleotide nucleotidyltransferase family. The cofactor is Mg(2+).

It localises to the cytoplasm. The enzyme catalyses RNA(n+1) + phosphate = RNA(n) + a ribonucleoside 5'-diphosphate. Involved in mRNA degradation. Catalyzes the phosphorolysis of single-stranded polyribonucleotides processively in the 3'- to 5'-direction. This is Polyribonucleotide nucleotidyltransferase from Rickettsia peacockii (strain Rustic).